Consider the following 121-residue polypeptide: Flagellar protein FliT (121 aa).

Residues 1-50 (MNHAPHLYFAWQQLVDKSQLMLRLATEEQWDELIASEMAYVNAVQEIAHL) are required for homodimerization. Residues 60–98 (MQEQLRPMLRLILDNESKVKQLLQIRMDELAKLVGQSSV) form a fliD binding region.

It belongs to the FliT family. As to quaternary structure, homodimer. Interacts with FliD and FlhC.

It localises to the cytoplasm. The protein resides in the cytosol. Functionally, dual-function protein that regulates the transcription of class 2 flagellar operons and that also acts as an export chaperone for the filament-capping protein FliD. As a transcriptional regulator, acts as an anti-FlhDC factor; it directly binds FlhC, thus inhibiting the binding of the FlhC/FlhD complex to class 2 promoters, resulting in decreased expression of class 2 flagellar operons. As a chaperone, effects FliD transition to the membrane by preventing its premature polymerization, and by directing it to the export apparatus. This chain is Flagellar protein FliT, found in Shigella sonnei (strain Ss046).